A 381-amino-acid chain; its full sequence is Dual-specificity RNA methyltransferase RlmN (381 aa).

The Proton acceptor role is filled by E96. Positions 102–342 (TDDRGTLCVS…TRTTRGDDID (241 aa)) constitute a Radical SAM core domain. Residues C109 and C345 are joined by a disulfide bond. C116, C120, and C123 together coordinate [4Fe-4S] cluster. S-adenosyl-L-methionine is bound by residues 170–171 (GE), S202, 224–226 (SLH), and N302. Catalysis depends on C345, which acts as the S-methylcysteine intermediate.

This sequence belongs to the radical SAM superfamily. RlmN family. [4Fe-4S] cluster is required as a cofactor.

Its subcellular location is the cytoplasm. It carries out the reaction adenosine(2503) in 23S rRNA + 2 reduced [2Fe-2S]-[ferredoxin] + 2 S-adenosyl-L-methionine = 2-methyladenosine(2503) in 23S rRNA + 5'-deoxyadenosine + L-methionine + 2 oxidized [2Fe-2S]-[ferredoxin] + S-adenosyl-L-homocysteine. The catalysed reaction is adenosine(37) in tRNA + 2 reduced [2Fe-2S]-[ferredoxin] + 2 S-adenosyl-L-methionine = 2-methyladenosine(37) in tRNA + 5'-deoxyadenosine + L-methionine + 2 oxidized [2Fe-2S]-[ferredoxin] + S-adenosyl-L-homocysteine. In terms of biological role, specifically methylates position 2 of adenine 2503 in 23S rRNA and position 2 of adenine 37 in tRNAs. m2A2503 modification seems to play a crucial role in the proofreading step occurring at the peptidyl transferase center and thus would serve to optimize ribosomal fidelity. This is Dual-specificity RNA methyltransferase RlmN from Pseudomonas putida (strain W619).